Here is a 492-residue protein sequence, read N- to C-terminus: Steroid 21-hydroxylase (492 aa).

Residues Arg91 and Lys120 each coordinate heme b. Position 231 (Arg231) interacts with 17alpha-hydroxyprogesterone. Progesterone is bound at residue Arg231. The heme b site is built by His363, Arg424, and Cys426.

The protein belongs to the cytochrome P450 family. Heme b serves as cofactor.

Its subcellular location is the endoplasmic reticulum membrane. The protein localises to the microsome membrane. The catalysed reaction is 17alpha-hydroxyprogesterone + reduced [NADPH--hemoprotein reductase] + O2 = 11-deoxycortisol + oxidized [NADPH--hemoprotein reductase] + H2O + H(+). It catalyses the reaction progesterone + reduced [NADPH--hemoprotein reductase] + O2 = 21-hydroxyprogesterone + oxidized [NADPH--hemoprotein reductase] + H2O + H(+). Functionally, specifically catalyzes the 21-hydroxylation of steroids. Required for the adrenal synthesis of mineralocorticoids and glucocorticoids. This chain is Steroid 21-hydroxylase (CYP21), found in Canis lupus familiaris (Dog).